Here is an 845-residue protein sequence, read N- to C-terminus: Beta-mannosidase B (845 aa).

N252 carries N-linked (GlcNAc...) asparagine glycosylation. E432 (proton donor) is an active-site residue. N-linked (GlcNAc...) asparagine glycosylation is found at N717 and N723.

It belongs to the glycosyl hydrolase 2 family. Beta-mannosidase B subfamily.

It catalyses the reaction Hydrolysis of terminal, non-reducing beta-D-mannose residues in beta-D-mannosides.. It functions in the pathway glycan metabolism; N-glycan degradation. Its function is as follows. Exoglycosidase that cleaves the single beta-linked mannose residue from the non-reducing end of beta-mannosidic oligosaccharides of various complexity and length. Prefers mannobiose over mannotriose and has no activity against polymeric mannan. Is also severely restricted by galactosyl substitutions at the +1 subsite. This Aspergillus fumigatus (strain ATCC MYA-4609 / CBS 101355 / FGSC A1100 / Af293) (Neosartorya fumigata) protein is Beta-mannosidase B (mndB).